The following is a 300-amino-acid chain: Oxidoreductase BOA1 (300 aa).

This sequence belongs to the NmrA-type oxidoreductase family. Isoflavone reductase subfamily.

It functions in the pathway polyketide biosynthesis. Oxidoreductase; part of the gene cluster A that mediates the biosynthesis of botcinic acid and its botcinin derivatives, acetate-derived polyketides that contribute to virulence when combined with the sesquiterpene botrydial. Botcinic acid and its derivatives have been shown to induce chlorosis and necrosis during host plant infection, but also have antifungal activities. Two polyketide synthases, BOA6 and BOA9, are involved in the biosynthesis of botcinins. BOA6 mediates the formation of the per-methylated tetraketide core by condensation of four units of malonyl-CoA with one unit of acetyl-CoA, which would be methylated in activated methylene groups to yield a bicyclic acid intermediate that could then either be converted to botrylactone derivatives or lose the starter acetate unit through a retro-Claisen type C-C bond cleavage to yield botcinin derivatives. The second polyketide synthase, BOA9, is probably required for the biosynthesis of the tetraketide side chain of botcinins. The methyltransferase (MT) domain within BOA6 is probably responsible for the incorporation of four methyl groups. The trans-enoyl reductase BOA5 might take over the enoyl reductase function of BOA6 that misses an ER domain. The monooxygenases BOA2, BOA3 and BOA4 might be involved in further hydroxylations at C4, C5 and C8, whereas BOA7, close to BOA9, could potentially be involved in the hydroxylation at C4 in the side chain of botcinins. The protein is Oxidoreductase BOA1 of Botryotinia fuckeliana (strain B05.10) (Noble rot fungus).